The sequence spans 250 residues: MANIHIVIPARLKSTRLPNKMLADIAGKPMIQRVYEQVAKSKFDSIIIATDSQKIKDIAESFGAKVVLTRDDHQSGTDRIAEAVTKLGFADEDIVVNVQGDEPLIPIENIEQAAQLLIDKSEAVVSTLCEKITDVEDIYNPNNVKVVFDKNNYALYFSRASIPFERGFSEKEQINISEFFRHIGIYAYRVAFLKHYAELTVSPIEKYEALEQLRVLYNGYKIAIEQSAKSTPAGVDTLQDLEKVRRLFNV.

It belongs to the KdsB family.

It is found in the cytoplasm. The enzyme catalyses 3-deoxy-alpha-D-manno-oct-2-ulosonate + CTP = CMP-3-deoxy-beta-D-manno-octulosonate + diphosphate. It functions in the pathway nucleotide-sugar biosynthesis; CMP-3-deoxy-D-manno-octulosonate biosynthesis; CMP-3-deoxy-D-manno-octulosonate from 3-deoxy-D-manno-octulosonate and CTP: step 1/1. It participates in bacterial outer membrane biogenesis; lipopolysaccharide biosynthesis. Its function is as follows. Activates KDO (a required 8-carbon sugar) for incorporation into bacterial lipopolysaccharide in Gram-negative bacteria. This chain is 3-deoxy-manno-octulosonate cytidylyltransferase, found in Francisella tularensis subsp. novicida (strain U112).